The sequence spans 367 residues: Glutamate 5-kinase (367 aa).

Lys-10 is a binding site for ATP. Residues Ser-50, Asp-137, and Asn-149 each contribute to the substrate site. Residues 169 to 170 and 211 to 217 each bind ATP; these read TD and TGGMSTK. The region spanning 275–353 is the PUA domain; that stretch reads AGEITVDEGA…QEIDAILGYE (79 aa).

Belongs to the glutamate 5-kinase family.

The protein localises to the cytoplasm. The catalysed reaction is L-glutamate + ATP = L-glutamyl 5-phosphate + ADP. The protein operates within amino-acid biosynthesis; L-proline biosynthesis; L-glutamate 5-semialdehyde from L-glutamate: step 1/2. Functionally, catalyzes the transfer of a phosphate group to glutamate to form L-glutamate 5-phosphate. This Shigella flexneri protein is Glutamate 5-kinase.